The chain runs to 188 residues: Protein GrpE 2 (188 aa).

This sequence belongs to the GrpE family. Homodimer.

It localises to the cytoplasm. Its function is as follows. Participates actively in the response to hyperosmotic and heat shock by preventing the aggregation of stress-denatured proteins, in association with DnaK and GrpE. It is the nucleotide exchange factor for DnaK and may function as a thermosensor. Unfolded proteins bind initially to DnaJ; upon interaction with the DnaJ-bound protein, DnaK hydrolyzes its bound ATP, resulting in the formation of a stable complex. GrpE releases ADP from DnaK; ATP binding to DnaK triggers the release of the substrate protein, thus completing the reaction cycle. Several rounds of ATP-dependent interactions between DnaJ, DnaK and GrpE are required for fully efficient folding. The sequence is that of Protein GrpE 2 from Buchnera aphidicola subsp. Acyrthosiphon pisum (strain APS) (Acyrthosiphon pisum symbiotic bacterium).